A 586-amino-acid chain; its full sequence is CTP synthase 2 (586 aa).

The Glutamine amidotransferase type-1 domain maps to 300–554 (SIALVGKYTK…LAATGNLNAH (255 aa)). Active-site for GATase activity residues include Cys399, His526, and Glu528. Residues Ser568, Ser571, and Ser574 each carry the phosphoserine modification.

Belongs to the CTP synthase family.

The enzyme catalyses UTP + L-glutamine + ATP + H2O = CTP + L-glutamate + ADP + phosphate + 2 H(+). It functions in the pathway pyrimidine metabolism; CTP biosynthesis via de novo pathway; CTP from UDP: step 2/2. Catalyzes the ATP-dependent amination of UTP to CTP with either L-glutamine or ammonia as the source of nitrogen. Constitutes the rate-limiting enzyme in the synthesis of cytosine nucleotides. The chain is CTP synthase 2 (Ctps2) from Mus musculus (Mouse).